The sequence spans 382 residues: Guanine nucleotide exchange factor for Rab-3A (382 aa).

The span at 1 to 17 shows a compositional bias: pro residues; it reads MWSGPPQPDQGLPPPLA. The segment at 1 to 60 is disordered; that stretch reads MWSGPPQPDQGLPPPLAAVPVPWKSTDPCQGHRESPGALVETSAGEEAQGQEGPAAAQLD. Over residues 45–58 the composition is skewed to low complexity; sequence GEEAQGQEGPAAAQ. The stretch at 73–161 forms a coiled coil; that stretch reads EKGSEFLKEE…AEVTALKTLV (89 aa). Residues 166 to 198 are disordered; that stretch reads PASPNRELHPQLLSPTKAGPRKGHSRHKSTSST. Ser-168 and Ser-179 each carry phosphoserine. Basic residues predominate over residues 184-194; sequence GPRKGHSRHKS.

This sequence belongs to the SEC2 family. Interacts with RAB3A and IHPK1 through the coiled-coil domain. This interaction is competitive. IHPK1 kinase activity is not required for this interaction.

Its function is as follows. Guanine nucleotide exchange factor (GEF) which may activate RAB3A, a GTPase that regulates synaptic vesicle exocytosis. Promotes the exchange of GDP to GTP, converting inactive GDP-bound Rab proteins into their active GTP-bound form. May also activate RAB8A and RAB8B. The protein is Guanine nucleotide exchange factor for Rab-3A (RAB3IL1) of Homo sapiens (Human).